Reading from the N-terminus, the 158-residue chain is NAD(P)H-quinone oxidoreductase subunit J, chloroplastic (158 aa).

Belongs to the complex I 30 kDa subunit family. In terms of assembly, NDH is composed of at least 16 different subunits, 5 of which are encoded in the nucleus.

The protein resides in the plastid. It localises to the chloroplast thylakoid membrane. The catalysed reaction is a plastoquinone + NADH + (n+1) H(+)(in) = a plastoquinol + NAD(+) + n H(+)(out). It catalyses the reaction a plastoquinone + NADPH + (n+1) H(+)(in) = a plastoquinol + NADP(+) + n H(+)(out). NDH shuttles electrons from NAD(P)H:plastoquinone, via FMN and iron-sulfur (Fe-S) centers, to quinones in the photosynthetic chain and possibly in a chloroplast respiratory chain. The immediate electron acceptor for the enzyme in this species is believed to be plastoquinone. Couples the redox reaction to proton translocation, and thus conserves the redox energy in a proton gradient. This Acorus calamus var. americanus (American sweet flag) protein is NAD(P)H-quinone oxidoreductase subunit J, chloroplastic.